The sequence spans 123 residues: Large ribosomal subunit protein uL18 (123 aa).

This sequence belongs to the universal ribosomal protein uL18 family. As to quaternary structure, part of the 50S ribosomal subunit; part of the 5S rRNA/L5/L18/L25 subcomplex. Contacts the 5S and 23S rRNAs.

In terms of biological role, this is one of the proteins that bind and probably mediate the attachment of the 5S RNA into the large ribosomal subunit, where it forms part of the central protuberance. In Protochlamydia amoebophila (strain UWE25), this protein is Large ribosomal subunit protein uL18.